The primary structure comprises 498 residues: Protein MGF 505-5R (498 aa).

It belongs to the asfivirus MGF 505 family.

Functionally, plays a role in virus cell tropism, and may be required for efficient virus replication in macrophages. This is Protein MGF 505-5R from Ornithodoros (relapsing fever ticks).